The primary structure comprises 62 residues: U10-hottentoxin-Hj2a (62 aa).

A signal peptide spans 1–22 (MQKLLIILILFCILKFNVDVEG). 3 cysteine pairs are disulfide-bonded: Cys28/Cys46, Cys33/Cys59, and Cys37/Cys61.

This sequence belongs to the short scorpion toxin superfamily. Potassium channel inhibitor family. Alpha-KTx 23 subfamily. As to expression, expressed by the venom gland.

It localises to the secreted. May block potassium channels. This chain is U10-hottentoxin-Hj2a, found in Hottentotta judaicus (Black scorpion).